The sequence spans 101 residues: Phosphoribosyl-AMP cyclohydrolase (101 aa).

A Mg(2+)-binding site is contributed by Asp-71. Cys-72 serves as a coordination point for Zn(2+). Mg(2+) is bound by residues Asp-73 and Asp-75. The Zn(2+) site is built by Cys-88 and Cys-95.

This sequence belongs to the PRA-CH family. Homodimer. Mg(2+) serves as cofactor. It depends on Zn(2+) as a cofactor.

It is found in the cytoplasm. It catalyses the reaction 1-(5-phospho-beta-D-ribosyl)-5'-AMP + H2O = 1-(5-phospho-beta-D-ribosyl)-5-[(5-phospho-beta-D-ribosylamino)methylideneamino]imidazole-4-carboxamide. The protein operates within amino-acid biosynthesis; L-histidine biosynthesis; L-histidine from 5-phospho-alpha-D-ribose 1-diphosphate: step 3/9. In terms of biological role, catalyzes the hydrolysis of the adenine ring of phosphoribosyl-AMP. This is Phosphoribosyl-AMP cyclohydrolase from Bacillus cereus (strain G9842).